The primary structure comprises 299 residues: ATP phosphoribosyltransferase (299 aa).

Belongs to the ATP phosphoribosyltransferase family. Long subfamily. Requires Mg(2+) as cofactor.

Its subcellular location is the cytoplasm. It carries out the reaction 1-(5-phospho-beta-D-ribosyl)-ATP + diphosphate = 5-phospho-alpha-D-ribose 1-diphosphate + ATP. Its pathway is amino-acid biosynthesis; L-histidine biosynthesis; L-histidine from 5-phospho-alpha-D-ribose 1-diphosphate: step 1/9. Feedback inhibited by histidine. Functionally, catalyzes the condensation of ATP and 5-phosphoribose 1-diphosphate to form N'-(5'-phosphoribosyl)-ATP (PR-ATP). Has a crucial role in the pathway because the rate of histidine biosynthesis seems to be controlled primarily by regulation of HisG enzymatic activity. The chain is ATP phosphoribosyltransferase from Shewanella woodyi (strain ATCC 51908 / MS32).